The chain runs to 237 residues: Large ribosomal subunit protein uL1 (237 aa).

This sequence belongs to the universal ribosomal protein uL1 family. Part of the 50S ribosomal subunit.

In terms of biological role, binds directly to 23S rRNA. The L1 stalk is quite mobile in the ribosome, and is involved in E site tRNA release. Its function is as follows. Protein L1 is also a translational repressor protein, it controls the translation of the L11 operon by binding to its mRNA. The sequence is that of Large ribosomal subunit protein uL1 from Nocardia farcinica (strain IFM 10152).